Reading from the N-terminus, the 309-residue chain is Probable nitrogen assimilation transcriptional activator (309 aa).

In terms of domain architecture, HTH lysR-type spans 1 to 57 (MRLEQLQAALRVAETGSFQEAAQKVGCNQSTISRQVKGLEDELGIALFRRQGRMKLT). Residues 18 to 37 (FQEAAQKVGCNQSTISRQVK) constitute a DNA-binding region (H-T-H motif).

Belongs to the LysR transcriptional regulatory family.

Functionally, seems to regulate utilization of fixed nitrogen by controlling the expression of a certain gene(s) involved in nitrogen metabolism. The polypeptide is Probable nitrogen assimilation transcriptional activator (ntcB) (Synechococcus elongatus (strain ATCC 33912 / PCC 7942 / FACHB-805) (Anacystis nidulans R2)).